Reading from the N-terminus, the 381-residue chain is MSLEPFQKSSALSLGVELEMQLVNTHDYDLAPYAEDMLRLMSKIALPGAVVPEMTSSMIEVSTGICHSSAEVLGQLTQIRDALVKSADKLNIAVVGGGTHPFQQWHERRIYDKPRFRELSELYGYLSKQFTIFGQHVHIGCPDADTALLTLHRMSRYIPHFIALSASSPYVQGQDTAFDSARLNSVFAFPLSGRAPFALTWDEFTVYFNKMAHTGVVKSMKDFYWDIRPKPEFGTIEIRVFDTPLTIERATALAGYVQSLGSWFMNDQPFMPTEDDYLVYTYNRFQACRFGLDAVYVDPATGGHMPLREHILMTMAQIERHAHRLDASASIHLLRTSVERNDNDARWLRERQGEERLLAEVIRQAADRFRGGVDHEPGGFS.

This sequence belongs to the glutamate--cysteine ligase type 2 family. YbdK subfamily.

It carries out the reaction L-cysteine + L-glutamate + ATP = gamma-L-glutamyl-L-cysteine + ADP + phosphate + H(+). Its function is as follows. ATP-dependent carboxylate-amine ligase which exhibits weak glutamate--cysteine ligase activity. This is Putative glutamate--cysteine ligase 2 from Polaromonas naphthalenivorans (strain CJ2).